A 110-amino-acid polypeptide reads, in one-letter code: Phosphoribosyl-ATP pyrophosphatase (110 aa).

This sequence belongs to the PRA-PH family.

It is found in the cytoplasm. It catalyses the reaction 1-(5-phospho-beta-D-ribosyl)-ATP + H2O = 1-(5-phospho-beta-D-ribosyl)-5'-AMP + diphosphate + H(+). The protein operates within amino-acid biosynthesis; L-histidine biosynthesis; L-histidine from 5-phospho-alpha-D-ribose 1-diphosphate: step 2/9. This is Phosphoribosyl-ATP pyrophosphatase from Clostridium botulinum (strain ATCC 19397 / Type A).